A 198-amino-acid polypeptide reads, in one-letter code: Protein GrpE (198 aa).

Belongs to the GrpE family. As to quaternary structure, homodimer.

The protein resides in the cytoplasm. Its function is as follows. Participates actively in the response to hyperosmotic and heat shock by preventing the aggregation of stress-denatured proteins, in association with DnaK and GrpE. It is the nucleotide exchange factor for DnaK and may function as a thermosensor. Unfolded proteins bind initially to DnaJ; upon interaction with the DnaJ-bound protein, DnaK hydrolyzes its bound ATP, resulting in the formation of a stable complex. GrpE releases ADP from DnaK; ATP binding to DnaK triggers the release of the substrate protein, thus completing the reaction cycle. Several rounds of ATP-dependent interactions between DnaJ, DnaK and GrpE are required for fully efficient folding. This is Protein GrpE from Actinobacillus pleuropneumoniae serotype 5b (strain L20).